A 580-amino-acid chain; its full sequence is Probable inositol transporter 3 (580 aa).

Transmembrane regions (helical) follow at residues 34-54 (GIGG…LLYI), 69-89 (EIIV…GGWY), 104-124 (VLFL…VIIL), 127-147 (LLVG…ISEM), 161-181 (GLLI…FVHT), 187-207 (WMLG…LTLP), 289-309 (FVGI…AGYA), 316-336 (ALAL…MMFV), 344-364 (LMII…AVFN), 455-475 (FGYL…PGMG), 493-513 (LAGG…SETF), and 524-544 (GTFL…WLLV).

Belongs to the major facilitator superfamily. Sugar transporter (TC 2.A.1.1) family.

The protein resides in the membrane. Functionally, plasma membrane inositol-proton symporter. This is Probable inositol transporter 3 (INT3) from Arabidopsis thaliana (Mouse-ear cress).